A 305-amino-acid chain; its full sequence is Taste receptor type 2 member 13 (305 aa).

Residues 1-7 lie on the Extracellular side of the membrane; it reads MGSNVYG. A helical membrane pass occupies residues 8-28; the sequence is ILTMVMIAEFVFGNMSNGFIV. Residues 29–43 lie on the Cytoplasmic side of the membrane; that stretch reads LINCIDWVRKGTLSS. The helical transmembrane segment at 44 to 64 threads the bilayer; it reads IGWILLFLAISRMVLIWEMLI. At 65–88 the chain is on the extracellular side; that stretch reads TWIKYMKYSFSFVTGTELRGIMFT. The helical transmembrane segment at 89–109 threads the bilayer; that stretch reads WVISNHFSLWLATILSIFYLL. Residues 110-128 lie on the Cytoplasmic side of the membrane; sequence KIASFSKPVFLYLKWREKK. The chain crosses the membrane as a helical span at residues 129-149; sequence VLLIVLLGNLIFLMLNILQIN. Topologically, residues 150–182 are extracellular; sequence KHIEHWMYQYERNITWSSRVSDFAGFSNLVLLE. An N-linked (GlcNAc...) asparagine glycan is attached at N162. Residues 183–203 form a helical membrane-spanning segment; sequence MIVFSVTPFTVALVSFILLIF. The Cytoplasmic portion of the chain corresponds to 204 to 232; that stretch reads SLWKHLQKMHLNSRGERDPSTKAHVNALR. The helical transmembrane segment at 233–253 threads the bilayer; sequence IMVSFLLLYATYFISFFLSLI. The Extracellular segment spans residues 254 to 262; sequence PMAHKTRLG. The helical transmembrane segment at 263 to 283 threads the bilayer; it reads LMFSITVGLFYPSSHSFILIL. Over 284–305 the chain is Cytoplasmic; that stretch reads GHSNLRQASLWVMTYLKCGQKH.

This sequence belongs to the G-protein coupled receptor T2R family.

Its subcellular location is the cell membrane. Receptor that may play a role in the perception of bitterness and is gustducin-linked. May play a role in sensing the chemical composition of the gastrointestinal content. The activity of this receptor may stimulate alpha gustducin, mediate PLC-beta-2 activation and lead to the gating of TRPM5. The chain is Taste receptor type 2 member 13 from Mus musculus (Mouse).